We begin with the raw amino-acid sequence, 522 residues long: MSQDLQKEVASRKTFAIISHPDAGKTTITEQLLLFGGVIRSAGTVKGKKSGKFATSDWMEIEKQRGISVTSSVMQFDYNGSRINILDTPGHSDFSEDTYRTLMAVDSAVMVIDAAKGIEAQTLKLFKVCRMRGIPIFTFINKMDRQGKMPLELLAELEEVLGIESYPMNWPIGMGKELAGLYDRYHRVIEQYRSEEDERFLPLGEDGDLKEAHAIQKSLYYDQALEEIMLLDEAGNDFSRERIIAGEQTPVFFGSALTNFGVETFLRTFVDFAPSPSSHESNEGVIEADNPKFSGFIFKIQANMNPAHRDRIAFIRICSGEFERGMNVTLTRTGKSMKLANSTQFMADDRETVNRAVAGDIIGLYDTGNYQIGDTITNGSKKLEFEKLPQFTPELFMRVYAKNVMKQKHFHKGVEQLVQEGAIQLFKTWRTEEYIIGAVGQLQFEVFEHRMRGEYNSEIRMEPIGKKIARWVKEEDADEKLSTARSMLVKDRFDQPLFLFENEFAINWFNDKNPDIELTSLL.

One can recognise a tr-type G domain in the interval Ala-10–Ser-277. Residues Ser-19–Thr-26, Asp-87–His-91, and Asn-141–Asp-144 contribute to the GTP site.

It belongs to the TRAFAC class translation factor GTPase superfamily. Classic translation factor GTPase family. PrfC subfamily.

It localises to the cytoplasm. Increases the formation of ribosomal termination complexes and stimulates activities of RF-1 and RF-2. It binds guanine nucleotides and has strong preference for UGA stop codons. It may interact directly with the ribosome. The stimulation of RF-1 and RF-2 is significantly reduced by GTP and GDP, but not by GMP. The sequence is that of Peptide chain release factor 3 from Listeria monocytogenes serotype 4b (strain F2365).